The following is a 411-amino-acid chain: MDAALLLSLLEANCSLALAEELLLDGWGEPPDPEGPYSYCNTTLDQIGTCWPQSAPGALVERPCPEYFNGIKYNTTRNAYRECLENGTWASRVNYSHCEPILDDKQRKYDLHYRIALIINYLGHCVSVVALVAAFLLFLVLRSIRCLRNVIHWNLITTFILRNITWFLLQLIDHEVHEGNEVWCRCVTTIFNYFVVTNFFWMFVEGCYLHTAIVMTYSTEHLRKWLFLFIGWCIPCPIIVAWAVGKLYYENEQCWFGKEPGDLVDYIYQGPIILVLLINFVFLFNIVRILMTKLRASTTSETIQYRKAVKATLVLLPLLGITYMLFFVNPGEDDLSQIVFIYFNSFLQSFQGFFVSVFYCFFNGEVRSALRKRWHRWQDHHALRVPVARAMSIPTSPTRISFHSIKQTAAV.

The not cleaved signal peptide spans 1–19; that stretch reads MDAALLLSLLEANCSLALA. Over 1-108 the chain is Extracellular; sequence MDAALLLSLL…EPILDDKQRK (108 aa). 5 N-linked (GlcNAc...) asparagine glycosylation sites follow: Asn-13, Asn-41, Asn-74, Asn-86, and Asn-94. Cystine bridges form between Cys-14-Cys-50, Cys-40-Cys-83, and Cys-64-Cys-98. Residues 109 to 139 form a helical membrane-spanning segment; sequence YDLHYRIALIINYLGHCVSVVALVAAFLLFL. Residues 140–146 are Cytoplasmic-facing; sequence VLRSIRC. The chain crosses the membrane as a helical span at residues 147–171; that stretch reads LRNVIHWNLITTFILRNITWFLLQL. Topologically, residues 172 to 185 are extracellular; it reads IDHEVHEGNEVWCR. Cysteines 184 and 254 form a disulfide. The chain crosses the membrane as a helical span at residues 186-214; sequence CVTTIFNYFVVTNFFWMFVEGCYLHTAIV. Residues 215-221 are Cytoplasmic-facing; the sequence is MTYSTEH. Residues 222–249 traverse the membrane as a helical segment; the sequence is LRKWLFLFIGWCIPCPIIVAWAVGKLYY. Residues 250 to 265 are Extracellular-facing; that stretch reads ENEQCWFGKEPGDLVD. The chain crosses the membrane as a helical span at residues 266–291; the sequence is YIYQGPIILVLLINFVFLFNIVRILM. Topologically, residues 292-302 are cytoplasmic; sequence TKLRASTTSET. Residues 303-327 traverse the membrane as a helical segment; it reads IQYRKAVKATLVLLPLLGITYMLFF. Residues 328-334 lie on the Extracellular side of the membrane; the sequence is VNPGEDD. The helical transmembrane segment at 335-364 threads the bilayer; sequence LSQIVFIYFNSFLQSFQGFFVSVFYCFFNG. Residues 365–411 lie on the Cytoplasmic side of the membrane; the sequence is EVRSALRKRWHRWQDHHALRVPVARAMSIPTSPTRISFHSIKQTAAV.

Belongs to the G-protein coupled receptor 2 family. Monomer. Interacts (via N-terminal extracellular domain) with CRF, UCN, UCN2 and UCN3. In terms of processing, a N-glycosylation site within the signal peptide impedes its proper cleavage and function. Predominantly expressed in limbic regions of the brain such as the lateral septum, the entorhinal cortex, the hypothalamic ventromedial nucleus and several amygdaloid nuclei. Also detectable in lung, kidney and heart.

Its subcellular location is the cell membrane. Its function is as follows. G-protein coupled receptor for CRH (corticotropin-releasing factor), UCN (urocortin), UCN2 and UCN3. Has high affinity for UCN. Ligand binding causes a conformation change that triggers signaling via guanine nucleotide-binding proteins (G proteins) and down-stream effectors, such as adenylate cyclase. Promotes the activation of adenylate cyclase, leading to increased intracellular cAMP levels. This chain is Corticotropin-releasing factor receptor 2 (Crhr2), found in Rattus norvegicus (Rat).